A 351-amino-acid chain; its full sequence is Dihydroorotate dehydrogenase (quinone) (351 aa).

FMN contacts are provided by residues 67 to 71 (AGFDK) and Thr-91. Lys-71 is a binding site for substrate. Substrate is bound at residue 116–120 (NAMGF). Asn-145 and Asn-178 together coordinate FMN. Asn-178 serves as a coordination point for substrate. Ser-181 acts as the Nucleophile in catalysis. Asn-183 contacts substrate. Lys-214 and Thr-242 together coordinate FMN. 243-244 (NT) is a substrate binding site. FMN contacts are provided by residues Gly-262, Gly-291, and 312-313 (YS).

Belongs to the dihydroorotate dehydrogenase family. Type 2 subfamily. In terms of assembly, monomer. Requires FMN as cofactor.

Its subcellular location is the cell membrane. It catalyses the reaction (S)-dihydroorotate + a quinone = orotate + a quinol. The protein operates within pyrimidine metabolism; UMP biosynthesis via de novo pathway; orotate from (S)-dihydroorotate (quinone route): step 1/1. Its function is as follows. Catalyzes the conversion of dihydroorotate to orotate with quinone as electron acceptor. The polypeptide is Dihydroorotate dehydrogenase (quinone) (Helicobacter pylori (strain P12)).